The following is a 1338-amino-acid chain: Vascular endothelial growth factor receptor 1 (1338 aa).

An N-terminal signal peptide occupies residues 1–26; that stretch reads MVSYWDTGVLLCALLSCLLLTGSSSG. Residues 27-758 lie on the Extracellular side of the membrane; sequence SKLKDPELSL…QGTSDKSNLE (732 aa). 7 consecutive Ig-like C2-type domains span residues 32 to 123, 151 to 214, 230 to 327, 335 to 421, 428 to 553, 556 to 654, and 661 to 747; these read PELS…TESA, GREL…VNGH, IDVQ…TSVH, TVKH…LTAT, PQIY…FYIT, PNGF…KEIT, and PYLL…AYLT. Disulfide bonds link C53/C107 and C158/C207. N-linked (GlcNAc...) asparagine glycosylation is found at N100, N164, N196, and N251. Residues C252 and C311 are joined by a disulfide bond. N-linked (GlcNAc...) asparagine glycosylation is found at N323, N402, N417, N474, N547, N597, N620, N625, and N666. A disulfide bond links C454 and C535. A disulfide bridge connects residues C577 and C636. C682 and C731 form a disulfide bridge. The chain crosses the membrane as a helical span at residues 759 to 780; the sequence is LITLTCTCVAATLFWLLLTLFI. Residues 781–1338 lie on the Cytoplasmic side of the membrane; it reads RKMKRSSSEI…SVVLYSTPPI (558 aa). Positions 827–1158 constitute a Protein kinase domain; it reads LKLGKSLGRG…ELVEKLGDLL (332 aa). ATP contacts are provided by residues 833–841 and K861; that span reads LGRGAFGKV. Residue Y914 is modified to Phosphotyrosine; by autocatalysis. Basic and acidic residues predominate over residues 940-957; that stretch reads PKKEKMEPGLEQGKKPRL. The tract at residues 940-982 is disordered; it reads PKKEKMEPGLEQGKKPRLDSVTSSESFASSGFQEDKSLSDVEE. The span at 959–971 shows a compositional bias: polar residues; it reads SVTSSESFASSGF. D1022 serves as the catalytic Proton acceptor. Residues Y1053, Y1169, Y1213, Y1242, Y1309, Y1327, and Y1333 each carry the phosphotyrosine; by autocatalysis modification.

The protein belongs to the protein kinase superfamily. Tyr protein kinase family. CSF-1/PDGF receptor subfamily. As to quaternary structure, interacts with VEGFA, VEGFB and PGF. Monomer in the absence of bound VEGFA, VEGFB or PGF. Homodimer in the presence of bound VEGFA, VEGFB and PGF. Can also form a heterodimer with KDR. Interacts (when tyrosine phosphorylated) with CBL, CRK, GRB2, NCK1, PIK3R1, PLCG, PSEN1 and PTPN11. Probably also interacts with PTPRB. Interacts with RACK1. Identified in a complex with CBL and CD2AP. N-glycosylated. Post-translationally, ubiquitinated after VEGFA-mediated autophosphorylation, leading to proteolytic degradation. In terms of processing, autophosphorylated on tyrosine residues upon ligand binding. Autophosphorylation occurs in trans, i.e. one subunit of the dimeric receptor phosphorylates tyrosine residues on the other subunit. Phosphorylation at Tyr-1169 is important for interaction with PLCG. Phosphorylation at Tyr-1213 is important for interaction with PIK3R1, PTPN11, GRB2, and PLCG. Phosphorylation at Tyr-1333 is important for endocytosis and for interaction with CBL, NCK1 and CRK. Is probably dephosphorylated by PTPRB. In terms of tissue distribution, detected in normal lung, but also in placenta, liver, kidney, heart and brain tissues. Specifically expressed in most of the vascular endothelial cells, and also expressed in peripheral blood monocytes. Isoform 2 is strongly expressed in placenta. Isoform 3 is expressed in corneal epithelial cells (at protein level). Isoform 3 is expressed in vascular smooth muscle cells (VSMC).

It localises to the cell membrane. Its subcellular location is the endosome. The protein resides in the secreted. It is found in the cytoplasm. The enzyme catalyses L-tyrosyl-[protein] + ATP = O-phospho-L-tyrosyl-[protein] + ADP + H(+). With respect to regulation, present in an inactive conformation in the absence of bound ligand. Binding of VEGFA, VEGFB or PGF leads to dimerization and activation by autophosphorylation on tyrosine residues. Its function is as follows. Tyrosine-protein kinase that acts as a cell-surface receptor for VEGFA, VEGFB and PGF, and plays an essential role in the development of embryonic vasculature, the regulation of angiogenesis, cell survival, cell migration, macrophage function, chemotaxis, and cancer cell invasion. Acts as a positive regulator of postnatal retinal hyaloid vessel regression. May play an essential role as a negative regulator of embryonic angiogenesis by inhibiting excessive proliferation of endothelial cells. Can promote endothelial cell proliferation, survival and angiogenesis in adulthood. Its function in promoting cell proliferation seems to be cell-type specific. Promotes PGF-mediated proliferation of endothelial cells, proliferation of some types of cancer cells, but does not promote proliferation of normal fibroblasts (in vitro). Has very high affinity for VEGFA and relatively low protein kinase activity; may function as a negative regulator of VEGFA signaling by limiting the amount of free VEGFA and preventing its binding to KDR. Modulates KDR signaling by forming heterodimers with KDR. Ligand binding leads to the activation of several signaling cascades. Activation of PLCG leads to the production of the cellular signaling molecules diacylglycerol and inositol 1,4,5-trisphosphate and the activation of protein kinase C. Mediates phosphorylation of PIK3R1, the regulatory subunit of phosphatidylinositol 3-kinase, leading to activation of phosphatidylinositol kinase and the downstream signaling pathway. Mediates activation of MAPK1/ERK2, MAPK3/ERK1 and the MAP kinase signaling pathway, as well as of the AKT1 signaling pathway. Phosphorylates SRC and YES1, and may also phosphorylate CBL. Promotes phosphorylation of AKT1 at 'Ser-473'. Promotes phosphorylation of PTK2/FAK1. In terms of biological role, phosphorylates PLCG. May function as decoy receptor for VEGFA. Functionally, has a truncated kinase domain; it increases phosphorylation of SRC at 'Tyr-418' by unknown means and promotes tumor cell invasion. The sequence is that of Vascular endothelial growth factor receptor 1 (FLT1) from Homo sapiens (Human).